Here is a 496-residue protein sequence, read N- to C-terminus: Glutamate--tRNA ligase (496 aa).

The 'HIGH' region signature appears at 11 to 21 (PSPTGLLHIGN). The 'KMSKS' region motif lies at 255 to 259 (KLSKR). Lysine 258 contributes to the ATP binding site.

The protein belongs to the class-I aminoacyl-tRNA synthetase family. Glutamate--tRNA ligase type 1 subfamily. In terms of assembly, monomer.

Its subcellular location is the cytoplasm. The catalysed reaction is tRNA(Glu) + L-glutamate + ATP = L-glutamyl-tRNA(Glu) + AMP + diphosphate. In terms of biological role, catalyzes the attachment of glutamate to tRNA(Glu) in a two-step reaction: glutamate is first activated by ATP to form Glu-AMP and then transferred to the acceptor end of tRNA(Glu). This is Glutamate--tRNA ligase from Streptococcus pyogenes serotype M49 (strain NZ131).